A 356-amino-acid chain; its full sequence is Holliday junction branch migration complex subunit RuvB (356 aa).

Positions 4-192 are large ATPase domain (RuvB-L); the sequence is DDTTDATADE…FGFTAHMEFY (189 aa). Residues L31, R32, G73, K76, T77, T78, 139–141, R182, Y192, and R229 contribute to the ATP site; that span reads EDF. T77 provides a ligand contact to Mg(2+). Residues 193 to 263 are small ATPAse domain (RuvB-S); it reads EPHELERVIH…IAAAALKVYE (71 aa). A head domain (RuvB-H) region spans residues 266–356; sequence ARGLDRLDRG…GNGQGDLFGA (91 aa). DNA is bound by residues R302, R321, and R326.

The protein belongs to the RuvB family. Homohexamer. Forms an RuvA(8)-RuvB(12)-Holliday junction (HJ) complex. HJ DNA is sandwiched between 2 RuvA tetramers; dsDNA enters through RuvA and exits via RuvB. An RuvB hexamer assembles on each DNA strand where it exits the tetramer. Each RuvB hexamer is contacted by two RuvA subunits (via domain III) on 2 adjacent RuvB subunits; this complex drives branch migration. In the full resolvosome a probable DNA-RuvA(4)-RuvB(12)-RuvC(2) complex forms which resolves the HJ.

The protein resides in the cytoplasm. It carries out the reaction ATP + H2O = ADP + phosphate + H(+). In terms of biological role, the RuvA-RuvB-RuvC complex processes Holliday junction (HJ) DNA during genetic recombination and DNA repair, while the RuvA-RuvB complex plays an important role in the rescue of blocked DNA replication forks via replication fork reversal (RFR). RuvA specifically binds to HJ cruciform DNA, conferring on it an open structure. The RuvB hexamer acts as an ATP-dependent pump, pulling dsDNA into and through the RuvAB complex. RuvB forms 2 homohexamers on either side of HJ DNA bound by 1 or 2 RuvA tetramers; 4 subunits per hexamer contact DNA at a time. Coordinated motions by a converter formed by DNA-disengaged RuvB subunits stimulates ATP hydrolysis and nucleotide exchange. Immobilization of the converter enables RuvB to convert the ATP-contained energy into a lever motion, pulling 2 nucleotides of DNA out of the RuvA tetramer per ATP hydrolyzed, thus driving DNA branch migration. The RuvB motors rotate together with the DNA substrate, which together with the progressing nucleotide cycle form the mechanistic basis for DNA recombination by continuous HJ branch migration. Branch migration allows RuvC to scan DNA until it finds its consensus sequence, where it cleaves and resolves cruciform DNA. This Streptomyces avermitilis (strain ATCC 31267 / DSM 46492 / JCM 5070 / NBRC 14893 / NCIMB 12804 / NRRL 8165 / MA-4680) protein is Holliday junction branch migration complex subunit RuvB.